Here is a 303-residue protein sequence, read N- to C-terminus: Uridylate-specific endoribonuclease C (303 aa).

Residues 1-16 (MVYLVFLCLLPSLISG) form the signal peptide. Residues 32-303 (TDAEIQSLAE…KRFVASSYPI (272 aa)) form the EndoU domain. Residues histidine 181, histidine 196, and lysine 239 contribute to the active site. Asparagine 287 carries N-linked (GlcNAc...) asparagine glycosylation.

It belongs to the ENDOU family. As to quaternary structure, monomer. Mn(2+) serves as cofactor.

The protein localises to the secreted. The catalysed reaction is ribonucleotidyl-uridine-RNA = a 5'-end dephospho-uridine-RNA + a 3'-end 2',3'-cyclophospho-ribonucleotide-RNA. Functionally, endoribonuclease that cleaves single-stranded RNAs at 5' of uridylates and releases a product with a 2',3'-cyclic phosphate at the 3'-end. The protein is Uridylate-specific endoribonuclease C (endou-c) of Xenopus laevis (African clawed frog).